The sequence spans 304 residues: Quorum-quenching protein AidA (304 aa).

It belongs to the AB hydrolase superfamily.

Functionally, involved in quorum quenching (QQ). Inhibits motility and biofilm formation. Could contribute in bacterial competition, as it is capable of hydrolyzing the signaling molecules that mediate interspecies communication. This chain is Quorum-quenching protein AidA, found in Acinetobacter baumannii (strain MDR-ZJ06).